A 177-amino-acid polypeptide reads, in one-letter code: MTLNLAAKKAVVEEVTAVASKAISAVVADYRGLTVNQMTQLRSEARKSGVYLRVVRNTLTRRAFKNTEFECLNDLLVGPVFIALSLEAPSDAARLLKDYAKTFEKLEIRALSVGGKVYNANQIDAVASLPTRDEAISKLMYVMKAPIEKFVRTLAEPHAKLARTLAAVKDKKAGNPA.

The protein belongs to the universal ribosomal protein uL10 family. As to quaternary structure, part of the ribosomal stalk of the 50S ribosomal subunit. The N-terminus interacts with L11 and the large rRNA to form the base of the stalk. The C-terminus forms an elongated spine to which L12 dimers bind in a sequential fashion forming a multimeric L10(L12)X complex.

Forms part of the ribosomal stalk, playing a central role in the interaction of the ribosome with GTP-bound translation factors. The chain is Large ribosomal subunit protein uL10 from Legionella pneumophila (strain Paris).